The primary structure comprises 201 residues: Potassium-transporting ATPase KdpC subunit (201 aa).

The chain crosses the membrane as a helical span at residues 13–33 (IIFMIFTILCGGIYTIFITGI).

It belongs to the KdpC family. The system is composed of three essential subunits: KdpA, KdpB and KdpC.

It is found in the cell membrane. Its function is as follows. Part of the high-affinity ATP-driven potassium transport (or Kdp) system, which catalyzes the hydrolysis of ATP coupled with the electrogenic transport of potassium into the cytoplasm. This subunit acts as a catalytic chaperone that increases the ATP-binding affinity of the ATP-hydrolyzing subunit KdpB by the formation of a transient KdpB/KdpC/ATP ternary complex. The sequence is that of Potassium-transporting ATPase KdpC subunit from Clostridium botulinum (strain Eklund 17B / Type B).